A 393-amino-acid chain; its full sequence is Na(+)/H(+) antiporter NhaA (393 aa).

Transmembrane regions (helical) follow at residues 24–44, 58–78, 96–116, 126–146, 155–175, 178–198, 214–234, 267–287, 300–320, 338–358, and 369–389; these read GGLVLMAVALAAIVTANSPLA, LSLLHWINDALMALFFLLVGL, ILPGAAALGGMLFPALFYILF, GWAIPTATDIAFALGVISLFG, IFLAALAIIDDLGAVVIIALF, SDLNLLALAAAAAVLAALYGM, AVLWVLVFASGIHATLAGVLL, VAFIVVPIFGFANAGVSFSGV, VAAGLLLGKLVGVLSTVFLLV, GVAALCGIGFTMSLFIGLLAF, and MGILLGSLLSGLVGAAMLATF.

The protein belongs to the NhaA Na(+)/H(+) (TC 2.A.33) antiporter family.

The protein resides in the cell inner membrane. It catalyses the reaction Na(+)(in) + 2 H(+)(out) = Na(+)(out) + 2 H(+)(in). Functionally, na(+)/H(+) antiporter that extrudes sodium in exchange for external protons. This Rhizobium etli (strain ATCC 51251 / DSM 11541 / JCM 21823 / NBRC 15573 / CFN 42) protein is Na(+)/H(+) antiporter NhaA.